The chain runs to 120 residues: UPF0344 protein lmo2265 (120 aa).

4 consecutive transmembrane segments (helical) span residues 3 to 23, 33 to 53, 62 to 82, and 92 to 112; these read GYIH…ALLI, MLQM…IMMV, ILAI…EMLL, and GMFL…GFYL.

Belongs to the UPF0344 family.

It is found in the cell membrane. The sequence is that of UPF0344 protein lmo2265 from Listeria monocytogenes serovar 1/2a (strain ATCC BAA-679 / EGD-e).